The primary structure comprises 129 residues: RxLR effector protein PexRD43 (129 aa).

Positions 1–16 (MRLAMILLSIPLFVSG) are cleaved as a signal peptide. The RxLR-dEER motif lies at 44 to 56 (RSLRTSGEANEER).

Belongs to the RxLR effector family.

The protein resides in the secreted. It is found in the host cytoplasm. The protein localises to the host nucleus. Its function is as follows. Effector that enhances P.infestans colonization of Nicotiana benthamiana leaves. The protein is RxLR effector protein PexRD43 of Phytophthora infestans (strain T30-4) (Potato late blight agent).